The primary structure comprises 431 residues: Glycolipid 2-alpha-mannosyltransferase 1 (431 aa).

Topologically, residues 1 to 9 (MASTRSNAR) are cytoplasmic. The helical; Signal-anchor for type II membrane protein transmembrane segment at 10–28 (LIRFGIFALVLIGCGYILT) threads the bilayer. Over 29-431 (RGSSFQPPNY…RQKGWEKYTA (403 aa)) the chain is Lumenal. The span at 35–44 (PPNYQQTQSP) shows a compositional bias: polar residues. The segment at 35 to 73 (PPNYQQTQSPAAHEKQTGNVAAGGGAGSGSAGAQVPLGK) is disordered. Over residues 55–64 (AAGGGAGSGS) the composition is skewed to gly residues. Glutamate 318 functions as the Nucleophile in the catalytic mechanism.

Belongs to the glycosyltransferase 15 family.

Its subcellular location is the golgi apparatus membrane. It functions in the pathway protein modification; protein glycosylation. Functionally, involved in O-glycosylation of cell wall and secreted proteins. Transfers an alpha-D-mannosyl residue from GDP-mannose into lipid-linked oligosaccharide, forming an alpha-(1-&gt;2)-D-mannosyl-D-mannose linkage. Mainly responsible for the addition of the second mannose residue in an O-linked mannose pentamer. Can also substitute for MNT2 by adding the third mannose residue. Important for adherence to host surfaces and for virulence. The protein is Glycolipid 2-alpha-mannosyltransferase 1 (MNT1) of Candida albicans (strain SC5314 / ATCC MYA-2876) (Yeast).